The chain runs to 354 residues: Methylthioribose-1-phosphate isomerase (354 aa).

Substrate is bound by residues 58–60 (RGA), arginine 101, and glutamine 204. Catalysis depends on aspartate 245, which acts as the Proton donor. 255 to 256 (NK) provides a ligand contact to substrate.

This sequence belongs to the eIF-2B alpha/beta/delta subunits family. MtnA subfamily.

The catalysed reaction is 5-(methylsulfanyl)-alpha-D-ribose 1-phosphate = 5-(methylsulfanyl)-D-ribulose 1-phosphate. The protein operates within amino-acid biosynthesis; L-methionine biosynthesis via salvage pathway; L-methionine from S-methyl-5-thio-alpha-D-ribose 1-phosphate: step 1/6. Functionally, catalyzes the interconversion of methylthioribose-1-phosphate (MTR-1-P) into methylthioribulose-1-phosphate (MTRu-1-P). The protein is Methylthioribose-1-phosphate isomerase of Xylella fastidiosa (strain M12).